The chain runs to 78 residues: MKAKIVLGAVILASGLLAGCSSSNNAQLDQISSDVNRLNTQVQQLSSDVQSANAQAKAAYEAARANQRLDNQVTTYKK.

The first 19 residues, 1-19 (MKAKIVLGAVILASGLLAG), serve as a signal peptide directing secretion. Residue cysteine 20 is the site of N-palmitoyl cysteine attachment. A lipid anchor (S-diacylglycerol cysteine) is attached at cysteine 20. 2 repeats span residues 25-35 (NAQLDQISSDV) and 39-49 (NTQVQQLSSDV). Residues 28-62 (LDQISSDVNRLNTQVQQLSSDVQSANAQAKAAYEA) adopt a coiled-coil conformation. Lysine 78 is subject to N6-murein peptidoglycan lysine.

This sequence belongs to the Lpp family. As to quaternary structure, homotrimer.

It is found in the cell outer membrane. It localises to the secreted. The protein resides in the cell wall. In terms of biological role, a highly abundant outer membrane lipoprotein that controls the distance between the inner and outer membranes. The only protein known to be covalently linked to the peptidoglycan network (PGN). Also non-covalently binds the PGN. The link between the cell outer membrane and PGN contributes to maintenance of the structural and functional integrity of the cell envelope, and maintains the correct distance between the PGN and the outer membrane. The sequence is that of Major outer membrane lipoprotein Lpp from Proteus mirabilis.